Reading from the N-terminus, the 349-residue chain is Interferon regulatory factor 2 (349 aa).

The IRF tryptophan pentad repeat DNA-binding region spans 5 to 113 (RMRMRPWLEE…NAFRVYRMLP (109 aa)). Residues Lys-75 and Lys-78 each carry the N6-acetyllysine modification. Lys-137 participates in a covalent cross-link: Glycyl lysine isopeptide (Lys-Gly) (interchain with G-Cter in SUMO); alternate. Lys-137 is covalently cross-linked (Glycyl lysine isopeptide (Lys-Gly) (interchain with G-Cter in SUMO2); alternate). Lys-166 is covalently cross-linked (Glycyl lysine isopeptide (Lys-Gly) (interchain with G-Cter in SUMO)). Ser-225 is subject to Phosphoserine. Polar residues predominate over residues 230 to 239 (YAESETTDSV). Residues 230–253 (YAESETTDSVASDEENAEGRPHWR) form a disordered region. Lys-260 participates in a covalent cross-link: Glycyl lysine isopeptide (Lys-Gly) (interchain with G-Cter in SUMO2). Lys-293 participates in a covalent cross-link: Glycyl lysine isopeptide (Lys-Gly) (interchain with G-Cter in SUMO). Positions 303 to 349 (SSWPPFTDLPLPAPVTPTPSSSRPDRETRASVIKKTSDITQARVKSC) are disordered.

Belongs to the IRF family. Interacts with BRD7, IRF2BP1 and IRF2BP2. Interacts with CREBBP in growing cells; the interaction acetylates IRF2 and regulates IRF2-dependent H4 promoter activity. Acetylated by CBP/ p300 during cell-growth. Acetylation on Lys-75 is required for stimulation of H4 promoter activity. Post-translationally, the major sites of sumoylation are Lys-137 and Lys-293. Sumoylation with SUMO1 increases its transcriptional repressor activity on IRF1 and diminishes its ability to activate ISRE and H4 promoter.

The protein resides in the nucleus. In terms of biological role, specifically binds to the upstream regulatory region of type I IFN and IFN-inducible MHC class I genes (the interferon consensus sequence (ICS)) and represses those genes. Also acts as an activator for several genes including H4 and IL7. Constitutively binds to the ISRE promoter to activate IL7. Involved in cell cycle regulation through binding the site II (HiNF-M) promoter region of H4 and activating transcription during cell growth. Antagonizes IRF1 transcriptional activation. This is Interferon regulatory factor 2 (Irf2) from Mus musculus (Mouse).